Consider the following 518-residue polypeptide: GTPase MTG2, mitochondrial (518 aa).

The transit peptide at Met-1–Tyr-23 directs the protein to the mitochondrion. Positions Gly-89–Ile-339 constitute an Obg domain. Residues Ala-340–Arg-512 enclose the OBG-type G domain. GTP contacts are provided by residues Gly-346–Ser-353, Asp-394–Ile-398, and Asn-460–Asp-463.

It belongs to the TRAFAC class OBG-HflX-like GTPase superfamily. OBG GTPase family. In terms of assembly, interacts with the mitochondrial 54S large ribosomal subunit.

It localises to the mitochondrion inner membrane. Required for mitochondrial protein synthesis. May be involved in mitochondrial ribosome biogenesis. The polypeptide is GTPase MTG2, mitochondrial (MTG2) (Saccharomyces cerevisiae (strain ATCC 204508 / S288c) (Baker's yeast)).